A 302-amino-acid chain; its full sequence is uncharacterized protein (302 aa).

One can recognise an S4 RNA-binding domain in the interval 19–90 (QWLFSVLKTA…GELDILFEDN (72 aa)). The active site involves aspartate 138. Residues 182-205 (KGTINSPIGRDRSHPTRRRVSPGG) are disordered.

The protein belongs to the pseudouridine synthase RluA family.

The enzyme catalyses a uridine in RNA = a pseudouridine in RNA. This is an uncharacterized protein from Bacillus subtilis (strain 168).